The following is a 238-amino-acid chain: Sugar fermentation stimulation protein homolog (238 aa).

Belongs to the SfsA family.

This Bartonella tribocorum (strain CIP 105476 / IBS 506) protein is Sugar fermentation stimulation protein homolog.